Here is a 284-residue protein sequence, read N- to C-terminus: Deoxyribonuclease-1 (284 aa).

The first 22 residues, 1 to 22 (MRGARLMGALLALAGLLQGALA), serve as a signal peptide directing secretion. Asparagine 40 is a glycosylation site (N-linked (GlcNAc...) asparagine). Glutamate 100 is a catalytic residue. Residues cysteine 123 and cysteine 126 are joined by a disulfide bond. Residue asparagine 128 is glycosylated (N-linked (GlcNAc...) asparagine). Residue histidine 156 is part of the active site. Cysteines 195 and 231 form a disulfide.

Belongs to the DNase I family. Ca(2+) is required as a cofactor. Mg(2+) serves as cofactor. Highest expression in pancreas.

It is found in the secreted. The protein localises to the zymogen granule. The protein resides in the nucleus envelope. It catalyses the reaction Endonucleolytic cleavage to 5'-phosphodinucleotide and 5'-phosphooligonucleotide end-products.. In terms of biological role, serum endocuclease secreted into body fluids by a wide variety of exocrine and endocrine organs. Expressed by non-hematopoietic tissues and preferentially cleaves protein-free DNA. Among other functions, seems to be involved in cell death by apoptosis. Binds specifically to G-actin and blocks actin polymerization. Together with DNASE1L3, plays a key role in degrading neutrophil extracellular traps (NETs). NETs are mainly composed of DNA fibers and are released by neutrophils to bind pathogens during inflammation. Degradation of intravascular NETs by DNASE1 and DNASE1L3 is required to prevent formation of clots that obstruct blood vessels and cause organ damage following inflammation. The protein is Deoxyribonuclease-1 (DNASE1) of Canis lupus familiaris (Dog).